The chain runs to 193 residues: Ribonuclease HII (193 aa).

The 179-residue stretch at 15 to 193 folds into the RNase H type-2 domain; sequence YIVAGVDEAG…SYHRRSFKSC (179 aa). A divalent metal cation is bound by residues Asp-21, Glu-22, and Asp-112.

It belongs to the RNase HII family. Mn(2+) is required as a cofactor. It depends on Mg(2+) as a cofactor.

The protein resides in the cytoplasm. It carries out the reaction Endonucleolytic cleavage to 5'-phosphomonoester.. Functionally, endonuclease that specifically degrades the RNA of RNA-DNA hybrids. This chain is Ribonuclease HII (rnhB), found in Rickettsia prowazekii (strain Madrid E).